The sequence spans 56 residues: Protein YqiD (56 aa).

A helical membrane pass occupies residues 2-22; that stretch reads FIAWYWIVLIALVVVGYFLHL.

The protein resides in the cell inner membrane. The sequence is that of Protein YqiD from Escherichia coli (strain K12).